A 1114-amino-acid polypeptide reads, in one-letter code: Kinesin-like protein KIN-12B (1114 aa).

The interval 1-119 (MRSLFSSKLS…GGGGGDSGVQ (119 aa)) is disordered. A compositionally biased stretch (low complexity) spans 98-107 (SAASPAPEGA). Residues 117-459 (GVQVVVRVRP…LRFAHRAKDI (343 aa)) form the Kinesin motor domain. An ATP-binding site is contributed by 197-204 (GQTGSGKT). Coiled coils occupy residues 772–810 (VLSA…KNQL) and 999–1043 (ELLV…DQEV). A compositionally biased stretch (polar residues) spans 1055–1065 (LPSNVVQSPEP). A disordered region spans residues 1055–1081 (LPSNVVQSPEPSETGPARYDTGGSFGD).

The protein belongs to the TRAFAC class myosin-kinesin ATPase superfamily. Kinesin family. KIN-12 subfamily.

The chain is Kinesin-like protein KIN-12B from Oryza sativa subsp. japonica (Rice).